We begin with the raw amino-acid sequence, 291 residues long: MSGLLNFGVPKGSLENATVELFRKAGWQISISSRSYFPGVDDDEMNCKLIRPQEMGKYVERGTIDAGIAGRDWVRENESDVVEVCEMVYSKVSRRPARWVLVVTRDSAVQKPEDLHGATISTELVGFTKRYFAERNIPVTVEFSWGATEAKVVDGLCDAIVEVTETGSTIKANGLRIVCDLMESVPVLIANKAAWADPWKREKIETIATLLKSALAAEGMVGLKMNAPNDQLEAITRVLPSLKNPTVSHLFNSDWVSIESILPEKEVRRIVPELIKLGAEGIVEYPLNKII.

This sequence belongs to the ATP phosphoribosyltransferase family. Long subfamily. Mg(2+) is required as a cofactor.

The protein resides in the cytoplasm. It catalyses the reaction 1-(5-phospho-beta-D-ribosyl)-ATP + diphosphate = 5-phospho-alpha-D-ribose 1-diphosphate + ATP. The protein operates within amino-acid biosynthesis; L-histidine biosynthesis; L-histidine from 5-phospho-alpha-D-ribose 1-diphosphate: step 1/9. With respect to regulation, feedback inhibited by histidine. Its function is as follows. Catalyzes the condensation of ATP and 5-phosphoribose 1-diphosphate to form N'-(5'-phosphoribosyl)-ATP (PR-ATP). Has a crucial role in the pathway because the rate of histidine biosynthesis seems to be controlled primarily by regulation of HisG enzymatic activity. The polypeptide is ATP phosphoribosyltransferase 1 (Geobacter sulfurreducens (strain ATCC 51573 / DSM 12127 / PCA)).